Consider the following 185-residue polypeptide: Class I hydrophobin SC6 (185 aa).

The signal sequence occupies residues 1–17 (MVSRVLALISVAMLVGA). Residues 70-104 (HIPEVTGSSTEEATSSSTWSGASSKPTDSAPTQCN) are disordered. The segment covering 75–93 (TGSSTEEATSSSTWSGASS) has biased composition (low complexity). Polar residues predominate over residues 94–104 (KPTDSAPTQCN). Disulfide bonds link C103–C164, C110–C158, C111–C144, and C165–C178.

The protein belongs to the fungal hydrophobin family. Self-assembles to form functional amyloid fibrils called rodlets. Self-assembly into fibrillar rodlets occurs spontaneously at hydrophobic:hydrophilic interfaces and the rodlets further associate laterally to form amphipathic monolayers.

The protein resides in the secreted. It localises to the cell wall. Aerial growth, conidiation, and dispersal of filamentous fungi in the environment rely upon a capability of their secreting small amphipathic proteins called hydrophobins (HPBs) with low sequence identity. Class I can self-assemble into an outermost layer of rodlet bundles on aerial cell surfaces, conferring cellular hydrophobicity that supports fungal growth, development and dispersal; whereas Class II form highly ordered films at water-air interfaces through intermolecular interactions but contribute nothing to the rodlet structure. SC6 is a dikaryon-specific class I hydrophobin that contributes to the formation of aerial hyphae and fruiting bodies. This chain is Class I hydrophobin SC6, found in Schizophyllum commune (Split gill fungus).